Consider the following 202-residue polypeptide: MDTPFAKTPSNLLIAGVDEAGRGPLAGPVITAAVILNPEIIIEGLADSKKLSLKKREELYEKIITNCKAFAIARADVEEIDRLNIFRATLLAMQRAINQLSIQPDKVLIDGHCCPDLPYETQAIVQGDQNVPAISAASILAKVTRDREMLKYDAQYPDYGFAIHKGYGTKAHLAAIHRFGITPVHRKSFEPVRQLKLFIPEE.

An RNase H type-2 domain is found at 12–201 (LLIAGVDEAG…VRQLKLFIPE (190 aa)). A divalent metal cation-binding residues include Asp-18, Glu-19, and Asp-110.

The protein belongs to the RNase HII family. Requires Mn(2+) as cofactor. Mg(2+) serves as cofactor.

It localises to the cytoplasm. It catalyses the reaction Endonucleolytic cleavage to 5'-phosphomonoester.. Its function is as follows. Endonuclease that specifically degrades the RNA of RNA-DNA hybrids. The protein is Ribonuclease HII of Coxiella burnetii (strain CbuG_Q212) (Coxiella burnetii (strain Q212)).